The primary structure comprises 210 residues: Thiamine-phosphate synthase (210 aa).

Residues Gln34–Lys38 and Asn66 each bind 4-amino-2-methyl-5-(diphosphooxymethyl)pyrimidine. Asp67 and Asp86 together coordinate Mg(2+). Ser105 lines the 4-amino-2-methyl-5-(diphosphooxymethyl)pyrimidine pocket. Thr131–Ser133 lines the 2-[(2R,5Z)-2-carboxy-4-methylthiazol-5(2H)-ylidene]ethyl phosphate pocket. Lys134 provides a ligand contact to 4-amino-2-methyl-5-(diphosphooxymethyl)pyrimidine. Residue Gly162 coordinates 2-[(2R,5Z)-2-carboxy-4-methylthiazol-5(2H)-ylidene]ethyl phosphate.

The protein belongs to the thiamine-phosphate synthase family. Requires Mg(2+) as cofactor.

The enzyme catalyses 2-[(2R,5Z)-2-carboxy-4-methylthiazol-5(2H)-ylidene]ethyl phosphate + 4-amino-2-methyl-5-(diphosphooxymethyl)pyrimidine + 2 H(+) = thiamine phosphate + CO2 + diphosphate. It catalyses the reaction 2-(2-carboxy-4-methylthiazol-5-yl)ethyl phosphate + 4-amino-2-methyl-5-(diphosphooxymethyl)pyrimidine + 2 H(+) = thiamine phosphate + CO2 + diphosphate. The catalysed reaction is 4-methyl-5-(2-phosphooxyethyl)-thiazole + 4-amino-2-methyl-5-(diphosphooxymethyl)pyrimidine + H(+) = thiamine phosphate + diphosphate. Its pathway is cofactor biosynthesis; thiamine diphosphate biosynthesis; thiamine phosphate from 4-amino-2-methyl-5-diphosphomethylpyrimidine and 4-methyl-5-(2-phosphoethyl)-thiazole: step 1/1. In terms of biological role, condenses 4-methyl-5-(beta-hydroxyethyl)thiazole monophosphate (THZ-P) and 2-methyl-4-amino-5-hydroxymethyl pyrimidine pyrophosphate (HMP-PP) to form thiamine monophosphate (TMP). This chain is Thiamine-phosphate synthase, found in Chlorobium limicola (strain DSM 245 / NBRC 103803 / 6330).